Here is a 396-residue protein sequence, read N- to C-terminus: Elongation factor Tu (396 aa).

Residues 11–205 (KPHVNIGTIG…VVDEYIPTPK (195 aa)) enclose the tr-type G domain. The interval 20 to 27 (GHVDHGKT) is G1. GTP is bound at residue 20-27 (GHVDHGKT). Position 27 (T27) interacts with Mg(2+). The segment at 61-65 (GITIN) is G2. The interval 82–85 (DAPG) is G3. GTP contacts are provided by residues 82 to 86 (DAPGH) and 137 to 140 (NKTD). The G4 stretch occupies residues 137–140 (NKTD). The segment at 175–177 (SAL) is G5.

This sequence belongs to the TRAFAC class translation factor GTPase superfamily. Classic translation factor GTPase family. EF-Tu/EF-1A subfamily. Monomer.

It localises to the cytoplasm. The catalysed reaction is GTP + H2O = GDP + phosphate + H(+). Its function is as follows. GTP hydrolase that promotes the GTP-dependent binding of aminoacyl-tRNA to the A-site of ribosomes during protein biosynthesis. In Limosilactobacillus fermentum (strain NBRC 3956 / LMG 18251) (Lactobacillus fermentum), this protein is Elongation factor Tu.